Consider the following 89-residue polypeptide: Large ribosomal subunit protein bL27 (89 aa).

The interval Met-1–Leu-21 is disordered.

Belongs to the bacterial ribosomal protein bL27 family.

This Rhizobium rhizogenes (strain K84 / ATCC BAA-868) (Agrobacterium radiobacter) protein is Large ribosomal subunit protein bL27.